A 79-amino-acid chain; its full sequence is Small ribosomal subunit protein bS16 (79 aa).

Belongs to the bacterial ribosomal protein bS16 family.

In Marinobacter nauticus (strain ATCC 700491 / DSM 11845 / VT8) (Marinobacter aquaeolei), this protein is Small ribosomal subunit protein bS16.